The primary structure comprises 158 residues: Dysbindin domain-containing protein 1 (158 aa).

Disordered regions lie at residues 1–50 (MEPP…VPAP) and 93–158 (ADSD…PQED). 2 positions are modified to phosphoserine: Ser95 and Ser119. Positions 125 to 141 (TRAEQSHEKQPLGDPER) are enriched in basic and acidic residues.

Belongs to the dysbindin family.

The protein is Dysbindin domain-containing protein 1 (DBNDD1) of Homo sapiens (Human).